A 367-amino-acid chain; its full sequence is Peptide chain release factor 1 (367 aa).

Gln238 is subject to N5-methylglutamine.

It belongs to the prokaryotic/mitochondrial release factor family. Methylated by PrmC. Methylation increases the termination efficiency of RF1.

It localises to the cytoplasm. Functionally, peptide chain release factor 1 directs the termination of translation in response to the peptide chain termination codons UAG and UAA. This Dictyoglomus thermophilum (strain ATCC 35947 / DSM 3960 / H-6-12) protein is Peptide chain release factor 1.